We begin with the raw amino-acid sequence, 596 residues long: Inactive metallocarboxypeptidase ecm14 (596 aa).

Positions 1-26 (MSQSHSILSSLILLVAIIFCVPHVIA) are cleaved as a signal peptide. The propeptide occupies 27-190 (VPWTTDGHAQ…SYPSMAYADA (164 aa)). N-linked (GlcNAc...) asparagine glycosylation is present at asparagine 114. The 321-residue stretch at 220 to 540 (NYQPLSVIIP…NVIKYFGDFL (321 aa)) folds into the Peptidase M14 domain. Positions 285 and 288 each coordinate Zn(2+). Substrate is bound by residues 285 to 288 (HARE), arginine 343, and 360 to 361 (DR). Cysteine 354 and cysteine 376 are disulfide-bonded. Asparagine 400 carries N-linked (GlcNAc...) asparagine glycosylation. Zn(2+) is bound at residue histidine 416. Residue 417–418 (SY) coordinates substrate.

This sequence belongs to the peptidase M14 family. It depends on Zn(2+) as a cofactor.

It localises to the vacuole. Its subcellular location is the secreted. Its function is as follows. Inactive carboxypeptidase that may play a role in cell wall organization and biogenesis. In Sclerotinia sclerotiorum (strain ATCC 18683 / 1980 / Ss-1) (White mold), this protein is Inactive metallocarboxypeptidase ecm14 (ecm14).